The sequence spans 510 residues: MGLPWYRVHTVLINDPGRLIAAHLMHTALVAGWAGSMALYELATFDPSDPVLNPMWRQGMFVLPFMARLGVTGSWSGWSITGETGIDPGFWSFEGVALAHIVLSGLLFLAACWHWVYWDLELFRDPRTGEPALDLPKMFGIHLFLAGLLCFGFGAFHLTGLFGPGMWVSDPYGLTGSVQPVAPEWGPDGFNPYNPGGVVAHHIAAGIVGIIAGLFHILVRPPQRLYKALRMGNIETVLSSSIAAVFFAAFVVAGTMWYGSATTPIELFGPTRYQWDSSYFQQEINRRVQASLASGATLEEAWSAIPEKLAFYDYIGNNPAKGGLFRTGPMNKGDGIAQAWKGHAVFRNKEGEELFVRRMPAFFESFPVILTDKNGVVKADIPFRRAESKYSFEQQGVTVSFYGGELNGQTFTDPPTVKSYARKAIFGEIFEFDTETLNSDGIFRTSPRGWFTFAHAVFALLFFFGHIWHGARTLFRDVFSGIDPELSPEQVEWGFYQKVGDVTTRRKEAV.

Residues 2–16 (GLPWYRVHTVLINDP) lie on the Cytoplasmic side of the membrane. Residues 17-37 (GRLIAAHLMHTALVAGWAGSM) traverse the membrane as a helical segment. The Lumenal portion of the chain corresponds to 38 to 94 (ALYELATFDPSDPVLNPMWRQGMFVLPFMARLGVTGSWSGWSITGETGIDPGFWSFE). Residues 95–116 (GVALAHIVLSGLLFLAACWHWV) traverse the membrane as a helical segment. At 117-134 (YWDLELFRDPRTGEPALD) the chain is on the cytoplasmic side. Residues 135–157 (LPKMFGIHLFLAGLLCFGFGAFH) form a helical membrane-spanning segment. The Lumenal portion of the chain corresponds to 158–196 (LTGLFGPGMWVSDPYGLTGSVQPVAPEWGPDGFNPYNPG). Residues 197 to 218 (GVVAHHIAAGIVGIIAGLFHIL) traverse the membrane as a helical segment. Topologically, residues 219–233 (VRPPQRLYKALRMGN) are cytoplasmic. Residues 234 to 254 (IETVLSSSIAAVFFAAFVVAG) traverse the membrane as a helical segment. Residues 255–450 (TMWYGSATTP…GIFRTSPRGW (196 aa)) lie on the Lumenal side of the membrane. Residues 451–473 (FTFAHAVFALLFFFGHIWHGART) traverse the membrane as a helical segment. Residues 474–510 (LFRDVFSGIDPELSPEQVEWGFYQKVGDVTTRRKEAV) lie on the Cytoplasmic side of the membrane.

As to quaternary structure, PSII is composed of 1 copy each of membrane proteins PsbA, PsbB, PsbC, PsbD, PsbE, PsbF, PsbH, PsbI, PsbJ, PsbK, PsbL, PsbM, PsbT, PsbX, PsbY, PsbZ, Psb30/Ycf12, peripheral proteins PsbO, CyanoQ (PsbQ), PsbU, PsbV and a large number of cofactors. It forms dimeric complexes. Part of a photosystem II (PSII) assembly intermediate complex PSII-I; crystallized from a strain deleted of psbJ, it forms monomeric PSII before addition of the oxygen evolving complex. PSII-I includes 3 assembly factors not found in mature PSII (Psb27, Psb28 and Psb34). Requires Binds multiple chlorophylls. PSII binds additional chlorophylls, carotenoids and specific lipids. as cofactor.

The protein resides in the cellular thylakoid membrane. In terms of biological role, one of the components of the core complex of photosystem II (PSII). It binds chlorophyll and helps catalyze the primary light-induced photochemical processes of PSII. PSII is a light-driven water:plastoquinone oxidoreductase, using light energy to abstract electrons from H(2)O, generating O(2) and a proton gradient subsequently used for ATP formation. This is Photosystem II CP47 reaction center protein from Thermosynechococcus vestitus (strain NIES-2133 / IAM M-273 / BP-1).